A 287-amino-acid polypeptide reads, in one-letter code: Large ribosomal subunit protein uL2 (287 aa).

A disordered region spans residues 221–287 (RGSVMNPCDH…SKRSRGGRDS (67 aa)). A compositionally biased stretch (basic residues) spans 258-287 (KTRKKNKPSNKLVVRRRRRISKRSRGGRDS).

This sequence belongs to the universal ribosomal protein uL2 family. Part of the 50S ribosomal subunit. Forms a bridge to the 30S subunit in the 70S ribosome.

In terms of biological role, one of the primary rRNA binding proteins. Required for association of the 30S and 50S subunits to form the 70S ribosome, for tRNA binding and peptide bond formation. It has been suggested to have peptidyltransferase activity; this is somewhat controversial. Makes several contacts with the 16S rRNA in the 70S ribosome. This Prochlorococcus marinus (strain MIT 9312) protein is Large ribosomal subunit protein uL2.